A 322-amino-acid chain; its full sequence is Acetyl-coenzyme A carboxylase carboxyl transferase subunit alpha (322 aa).

The CoA carboxyltransferase C-terminal domain occupies 30-293 (AVDISAEILR…KKALQDSLKL (264 aa)).

The protein belongs to the AccA family. In terms of assembly, acetyl-CoA carboxylase is a heterohexamer composed of biotin carboxyl carrier protein (AccB), biotin carboxylase (AccC) and two subunits each of ACCase subunit alpha (AccA) and ACCase subunit beta (AccD).

The protein resides in the cytoplasm. It catalyses the reaction N(6)-carboxybiotinyl-L-lysyl-[protein] + acetyl-CoA = N(6)-biotinyl-L-lysyl-[protein] + malonyl-CoA. The protein operates within lipid metabolism; malonyl-CoA biosynthesis; malonyl-CoA from acetyl-CoA: step 1/1. In terms of biological role, component of the acetyl coenzyme A carboxylase (ACC) complex. First, biotin carboxylase catalyzes the carboxylation of biotin on its carrier protein (BCCP) and then the CO(2) group is transferred by the carboxyltransferase to acetyl-CoA to form malonyl-CoA. This chain is Acetyl-coenzyme A carboxylase carboxyl transferase subunit alpha, found in Nitrosospira multiformis (strain ATCC 25196 / NCIMB 11849 / C 71).